A 123-amino-acid polypeptide reads, in one-letter code: Large ribosomal subunit protein uL14 (123 aa).

This sequence belongs to the universal ribosomal protein uL14 family. Part of the 50S ribosomal subunit. Forms a cluster with proteins L3 and L19. In the 70S ribosome, L14 and L19 interact and together make contacts with the 16S rRNA in bridges B5 and B8.

Binds to 23S rRNA. Forms part of two intersubunit bridges in the 70S ribosome. In Enterobacter sp. (strain 638), this protein is Large ribosomal subunit protein uL14.